The following is a 390-amino-acid chain: Chorismate synthase (390 aa).

NADP(+)-binding residues include arginine 39 and arginine 45. FMN is bound by residues 132–134 (RSS), 253–254 (NA), glycine 298, 313–317 (KPIPT), and arginine 339.

The protein belongs to the chorismate synthase family. In terms of assembly, homotetramer. FMNH2 serves as cofactor.

The enzyme catalyses 5-O-(1-carboxyvinyl)-3-phosphoshikimate = chorismate + phosphate. Its pathway is metabolic intermediate biosynthesis; chorismate biosynthesis; chorismate from D-erythrose 4-phosphate and phosphoenolpyruvate: step 7/7. In terms of biological role, catalyzes the anti-1,4-elimination of the C-3 phosphate and the C-6 proR hydrogen from 5-enolpyruvylshikimate-3-phosphate (EPSP) to yield chorismate, which is the branch point compound that serves as the starting substrate for the three terminal pathways of aromatic amino acid biosynthesis. This reaction introduces a second double bond into the aromatic ring system. The protein is Chorismate synthase of Bacillus cytotoxicus (strain DSM 22905 / CIP 110041 / 391-98 / NVH 391-98).